The following is a 175-amino-acid chain: SsrA-binding protein (175 aa).

This sequence belongs to the SmpB family.

It is found in the cytoplasm. In terms of biological role, required for rescue of stalled ribosomes mediated by trans-translation. Binds to transfer-messenger RNA (tmRNA), required for stable association of tmRNA with ribosomes. tmRNA and SmpB together mimic tRNA shape, replacing the anticodon stem-loop with SmpB. tmRNA is encoded by the ssrA gene; the 2 termini fold to resemble tRNA(Ala) and it encodes a 'tag peptide', a short internal open reading frame. During trans-translation Ala-aminoacylated tmRNA acts like a tRNA, entering the A-site of stalled ribosomes, displacing the stalled mRNA. The ribosome then switches to translate the ORF on the tmRNA; the nascent peptide is terminated with the 'tag peptide' encoded by the tmRNA and targeted for degradation. The ribosome is freed to recommence translation, which seems to be the essential function of trans-translation. The sequence is that of SsrA-binding protein from Prochlorococcus marinus subsp. pastoris (strain CCMP1986 / NIES-2087 / MED4).